The following is a 459-amino-acid chain: NADH-ubiquinone oxidoreductase chain 4 (459 aa).

13 consecutive transmembrane segments (helical) span residues 22 to 42 (MIWI…LLFF), 60 to 80 (PLTT…IMAS), 94 to 112 (LYLS…TFTA), 113 to 133 (TELI…LVII), 145 to 165 (AGTY…IALI), 196 to 216 (WLAY…HLWL), 224 to 244 (PIAG…YGMM), 257 to 277 (MAYP…SISL), 284 to 303 (SLIA…AILI), 308 to 330 (SFTG…FCLA), 351 to 371 (LLPL…ALPP), 391 to 411 (TTLL…LYMF), and 435 to 455 (ILMF…DIIT).

Belongs to the complex I subunit 4 family. Core subunit of respiratory chain NADH dehydrogenase (Complex I) which is composed of 45 different subunits.

It localises to the mitochondrion inner membrane. It carries out the reaction a ubiquinone + NADH + 5 H(+)(in) = a ubiquinol + NAD(+) + 4 H(+)(out). Core subunit of the mitochondrial membrane respiratory chain NADH dehydrogenase (Complex I) which catalyzes electron transfer from NADH through the respiratory chain, using ubiquinone as an electron acceptor. Essential for the catalytic activity and assembly of complex I. This is NADH-ubiquinone oxidoreductase chain 4 (MT-ND4) from Gorilla gorilla gorilla (Western lowland gorilla).